A 349-amino-acid chain; its full sequence is Dihydroorotate dehydrogenase (quinone) (349 aa).

Residues 67 to 71 (AGLDK) and threonine 91 contribute to the FMN site. Residue lysine 71 coordinates substrate. 116–120 (NRLGF) contacts substrate. FMN is bound by residues asparagine 147 and asparagine 180. Residue asparagine 180 participates in substrate binding. Serine 183 functions as the Nucleophile in the catalytic mechanism. Position 185 (asparagine 185) interacts with substrate. Positions 225 and 253 each coordinate FMN. 254 to 255 (NT) contributes to the substrate binding site. Residues glycine 276, glycine 305, and 326–327 (YT) each bind FMN.

Belongs to the dihydroorotate dehydrogenase family. Type 2 subfamily. Monomer. FMN serves as cofactor.

It localises to the cell membrane. It carries out the reaction (S)-dihydroorotate + a quinone = orotate + a quinol. It functions in the pathway pyrimidine metabolism; UMP biosynthesis via de novo pathway; orotate from (S)-dihydroorotate (quinone route): step 1/1. Functionally, catalyzes the conversion of dihydroorotate to orotate with quinone as electron acceptor. The polypeptide is Dihydroorotate dehydrogenase (quinone) (Bordetella avium (strain 197N)).